A 130-amino-acid chain; its full sequence is Small ribosomal subunit protein uS8 (130 aa).

It belongs to the universal ribosomal protein uS8 family. As to quaternary structure, part of the 30S ribosomal subunit. Contacts proteins S5 and S12.

In terms of biological role, one of the primary rRNA binding proteins, it binds directly to 16S rRNA central domain where it helps coordinate assembly of the platform of the 30S subunit. This Coxiella burnetii (strain Dugway 5J108-111) protein is Small ribosomal subunit protein uS8.